Consider the following 167-residue polypeptide: Protein-export protein SecB (167 aa).

A disordered region spans residues 1–20 (MASNDDAPVGAANGNGNTGA).

This sequence belongs to the SecB family. Homotetramer, a dimer of dimers. One homotetramer interacts with 1 SecA dimer.

The protein resides in the cytoplasm. In terms of biological role, one of the proteins required for the normal export of preproteins out of the cell cytoplasm. It is a molecular chaperone that binds to a subset of precursor proteins, maintaining them in a translocation-competent state. It also specifically binds to its receptor SecA. In Mesorhizobium japonicum (strain LMG 29417 / CECT 9101 / MAFF 303099) (Mesorhizobium loti (strain MAFF 303099)), this protein is Protein-export protein SecB.